A 599-amino-acid chain; its full sequence is MKNIRNFSIIAHIDHGKSTLSDRIIQICGGLSDREMEAQVLDSMDLERERGITIKAQSVTLDYKASDGETYQLNFIDTPGHVDFSYEVSRSLAACEGALLVVDAGQGVEAQTLANCYTAMEMDLEVVPVLNKIDLPAADPERVAEEIEDIVGIDATDAVRCSAKTGVGVQDVLERLVRDIPPPEGDPEGPLQALIIDSWFDNYLGVVSLIRIKNGTLRKGDKVKVMSTGQTYNADRLGIFTPKQVDRTELKCGEVGWLVCAIKDIHGAPVGDTLTLARNPAEKVLPGFKKVKPQVYAGLFPVSSDDYEAFRDALGKLSLNDASLFYEPESSSALGFGFRCGFLGLLHMEIIQERLEREYDLDLITTAPTVVYEVETTSREVIYVDSPSKLPAVNNIYELREPIAECHMLLPQAYLGNVITLCVEKRGVQTNMVYHGNQVALTYEIPMAEVVLDFFDRLKSTSRGYASLDYNFKRFQASDMVRVDVLINGERVDALALITHRDNSQNRGRELVEKMKDLIPRQQFDIAIQAAIGTHIIARSTVKQLRKNVLAKCYGGDISRKKKLLQKQKEGKKRMKQIGNVELPQEAFLAILHVGKDNK.

The 183-residue stretch at 2-184 (KNIRNFSIIA…RLVRDIPPPE (183 aa)) folds into the tr-type G domain. Residues 14-19 (DHGKST) and 131-134 (NKID) each bind GTP.

This sequence belongs to the TRAFAC class translation factor GTPase superfamily. Classic translation factor GTPase family. LepA subfamily.

It is found in the cell inner membrane. It catalyses the reaction GTP + H2O = GDP + phosphate + H(+). In terms of biological role, required for accurate and efficient protein synthesis under certain stress conditions. May act as a fidelity factor of the translation reaction, by catalyzing a one-codon backward translocation of tRNAs on improperly translocated ribosomes. Back-translocation proceeds from a post-translocation (POST) complex to a pre-translocation (PRE) complex, thus giving elongation factor G a second chance to translocate the tRNAs correctly. Binds to ribosomes in a GTP-dependent manner. This is Elongation factor 4 from Shigella dysenteriae serotype 1 (strain Sd197).